Here is a 207-residue protein sequence, read N- to C-terminus: MTAGIFGRKIGMTQIFDKDGSAIPVTLVKADPCQVCQIKTTKTDGYDAIQVGYLEEKLSKISKPIQGHLQKCGSTGYRKFGEFRVEDPETYNLGDQITTSAFSVGQKVRVTGTSIGKGFAGNQKRHNFSRGPMTHGSKNHRLPGSIGAGSTPGRVYPGKKMAGHLGNTKTTIKNSEILFVSEKENILILKGSLPGKAKNILRIAAKV.

The interval 115-151 (IGKGFAGNQKRHNFSRGPMTHGSKNHRLPGSIGAGST) is disordered.

Belongs to the universal ribosomal protein uL3 family. Part of the 50S ribosomal subunit.

Its subcellular location is the plastid. It localises to the chloroplast. In terms of biological role, one of the primary rRNA binding proteins, it binds directly near the 3'-end of the 23S rRNA, where it nucleates assembly of the 50S subunit. This is Large ribosomal subunit protein uL3c (rpl3) from Emiliania huxleyi (Coccolithophore).